The following is a 258-amino-acid chain: Peptidase inhibitor 15 (258 aa).

Residues 1-19 form the signal peptide; the sequence is MIAISAVSSALLFSLLCEA. Positions 20–60 are excised as a propeptide; the sequence is STVVLLNSTDSSPPTNNFTDIEAALKAQLDSADIPKARRKR. N-linked (GlcNAc...) asparagine glycans are attached at residues Asn26, Asn36, and Asn124. The SCP domain maps to 71-211; that stretch reads LDYHNQVRGK…RRAVYLVCNY (141 aa).

Belongs to the CRISP family. In terms of processing, N-glycosylated. As to expression, weakly expressed. Expressed at low level in prostate, mammary gland, salivary gland and thyroid gland.

It localises to the secreted. Its function is as follows. Serine protease inhibitor which displays weak inhibitory activity against trypsin. May play a role in facial patterning during embryonic development. The sequence is that of Peptidase inhibitor 15 (PI15) from Homo sapiens (Human).